The following is a 172-amino-acid chain: MDLTQYIASIENYPKEGITFRDISPLMASGKAYSYAIREIVQYACDKDIDMIVGPEARGFIIGCPVAVELGIGFAPVRKPGKLPREVISASYEKEYGLDTLTMHADAIKPGQRVLIVDDLLATGGTVKATIDLVEKLGGIVAGCAFLIELDGLNGRQAIGDYDCKVLMHFPG.

This sequence belongs to the purine/pyrimidine phosphoribosyltransferase family. Homodimer.

The protein localises to the cytoplasm. It carries out the reaction AMP + diphosphate = 5-phospho-alpha-D-ribose 1-diphosphate + adenine. The protein operates within purine metabolism; AMP biosynthesis via salvage pathway; AMP from adenine: step 1/1. In terms of biological role, catalyzes a salvage reaction resulting in the formation of AMP, that is energically less costly than de novo synthesis. This Streptococcus equi subsp. zooepidemicus (strain H70) protein is Adenine phosphoribosyltransferase.